Here is a 210-residue protein sequence, read N- to C-terminus: Fibrillarin-like rRNA/tRNA 2'-O-methyltransferase (210 aa).

Residues 1–34 (MTLPSGVERHDFGGETSLATQGQPVYGERTDGDW) form a disordered region. Residues 71–72 (TT), 87–88 (EF), 112–113 (DA), and 132–135 (DVAT) contribute to the S-adenosyl-L-methionine site.

The protein belongs to the methyltransferase superfamily. Fibrillarin family. Interacts with nop5. Component of box C/D small ribonucleoprotein (sRNP) particles that contain rpl7ae, FlpA and nop5, plus a guide RNA.

In terms of biological role, involved in pre-rRNA and tRNA processing. Utilizes the methyl donor S-adenosyl-L-methionine to catalyze the site-specific 2'-hydroxyl methylation of ribose moieties in rRNA and tRNA. Site specificity is provided by a guide RNA that base pairs with the substrate. Methylation occurs at a characteristic distance from the sequence involved in base pairing with the guide RNA. The polypeptide is Fibrillarin-like rRNA/tRNA 2'-O-methyltransferase (Haloarcula marismortui (strain ATCC 43049 / DSM 3752 / JCM 8966 / VKM B-1809) (Halobacterium marismortui)).